We begin with the raw amino-acid sequence, 149 residues long: Nucleoside diphosphate kinase (149 aa).

Lysine 9, phenylalanine 57, arginine 85, threonine 91, arginine 102, and asparagine 112 together coordinate ATP. Residue histidine 115 is the Pros-phosphohistidine intermediate of the active site.

It belongs to the NDK family. Homotetramer. The cofactor is Mg(2+).

The protein localises to the cytoplasm. The enzyme catalyses a 2'-deoxyribonucleoside 5'-diphosphate + ATP = a 2'-deoxyribonucleoside 5'-triphosphate + ADP. It carries out the reaction a ribonucleoside 5'-diphosphate + ATP = a ribonucleoside 5'-triphosphate + ADP. Functionally, major role in the synthesis of nucleoside triphosphates other than ATP. The ATP gamma phosphate is transferred to the NDP beta phosphate via a ping-pong mechanism, using a phosphorylated active-site intermediate. This chain is Nucleoside diphosphate kinase, found in Staphylococcus haemolyticus (strain JCSC1435).